A 276-amino-acid chain; its full sequence is MPELPEVETVRRSLERTVSGKTISSVKVFHPKMIRGMEVAPFVDALKQERIERVERRGKFLLFTFDRFYLVSHLRMEGKYFPYPQAIEKDKHTHVIFRFTDGSELHYNDVRKFGTMELREKETAMSVPPLAQLEREPFDPTFTAEVLAENLIRKKRSPIKTSLLDQSIFLGLGNIYVDETLFAARVHPLTKAGALTLDDISRIHAAGVDVLAKAVESGGSTIRSYVSPTGKGEFQLQLAVYGQTGAPCPRCGTAIEKIKVGGRGTHFCPTCQQVAL.

Proline 2 acts as the Schiff-base intermediate with DNA in catalysis. Glutamate 3 functions as the Proton donor in the catalytic mechanism. Lysine 59 serves as the catalytic Proton donor; for beta-elimination activity. DNA is bound by residues histidine 92, arginine 111, and lysine 155. The FPG-type zinc finger occupies 239-273 (AVYGQTGAPCPRCGTAIEKIKVGGRGTHFCPTCQQ). Arginine 263 (proton donor; for delta-elimination activity) is an active-site residue.

The protein belongs to the FPG family. In terms of assembly, monomer. Zn(2+) is required as a cofactor.

The enzyme catalyses Hydrolysis of DNA containing ring-opened 7-methylguanine residues, releasing 2,6-diamino-4-hydroxy-5-(N-methyl)formamidopyrimidine.. It carries out the reaction 2'-deoxyribonucleotide-(2'-deoxyribose 5'-phosphate)-2'-deoxyribonucleotide-DNA = a 3'-end 2'-deoxyribonucleotide-(2,3-dehydro-2,3-deoxyribose 5'-phosphate)-DNA + a 5'-end 5'-phospho-2'-deoxyribonucleoside-DNA + H(+). Its function is as follows. Involved in base excision repair of DNA damaged by oxidation or by mutagenic agents. Acts as a DNA glycosylase that recognizes and removes damaged bases. Has a preference for oxidized purines, such as 7,8-dihydro-8-oxoguanine (8-oxoG). Has AP (apurinic/apyrimidinic) lyase activity and introduces nicks in the DNA strand. Cleaves the DNA backbone by beta-delta elimination to generate a single-strand break at the site of the removed base with both 3'- and 5'-phosphates. This Exiguobacterium sibiricum (strain DSM 17290 / CCUG 55495 / CIP 109462 / JCM 13490 / 255-15) protein is Formamidopyrimidine-DNA glycosylase.